Consider the following 382-residue polypeptide: tRNA (guanine(26)-N(2))-dimethyltransferase (382 aa).

The 370-residue stretch at 4-373 folds into the Trm1 methyltransferase domain; that stretch reads VEIIEGKARI…KNLDEIKECI (370 aa). S-adenosyl-L-methionine-binding residues include arginine 44, arginine 69, and aspartate 87. Zn(2+) is bound by residues cysteine 246, cysteine 249, cysteine 263, and cysteine 266.

This sequence belongs to the class I-like SAM-binding methyltransferase superfamily. Trm1 family.

The catalysed reaction is guanosine(26) in tRNA + 2 S-adenosyl-L-methionine = N(2)-dimethylguanosine(26) in tRNA + 2 S-adenosyl-L-homocysteine + 2 H(+). Dimethylates a single guanine residue at position 26 of a number of tRNAs using S-adenosyl-L-methionine as donor of the methyl groups. This is tRNA (guanine(26)-N(2))-dimethyltransferase from Sulfolobus acidocaldarius (strain ATCC 33909 / DSM 639 / JCM 8929 / NBRC 15157 / NCIMB 11770).